A 521-amino-acid polypeptide reads, in one-letter code: Probable ATP-dependent RNA helicase Dbp45A (521 aa).

Positions 7-35 (NPFQILGLRPWLVKQLTKLGLKGATPIQQ) match the Q motif motif. The region spanning 38 to 209 (IPAILAGQDC…IFPIASDCFE (172 aa)) is the Helicase ATP-binding domain. 51–58 (AKTGSGKT) contributes to the ATP binding site. The DEAD box signature appears at 157 to 160 (DEAD). The Helicase C-terminal domain occupies 237 to 386 (VLIEALRKYR…EHPIDQRMVE (150 aa)). Residues 448-521 (KRKLQHAEPA…GRADVKKDKA (74 aa)) are disordered. 2 stretches are compositionally biased toward basic and acidic residues: residues 460–482 (EEGK…FEKK) and 502–521 (LNKE…KDKA).

Belongs to the DEAD box helicase family. DDX49/DBP8 subfamily.

It carries out the reaction ATP + H2O = ADP + phosphate + H(+). Functionally, probable ATP-binding RNA helicase. This Drosophila melanogaster (Fruit fly) protein is Probable ATP-dependent RNA helicase Dbp45A (Dbp45A).